Consider the following 698-residue polypeptide: Methionine synthase reductase (698 aa).

One can recognise a Flavodoxin-like domain in the interval 5–147 (LLLYATQQGQ…VVEPWIAGLW (143 aa)). 93 to 124 (LLGLGDSEYTYFCNGGKIIDKRLQELGARHFY) contacts FMN. The interval 166–247 (ALPVASPASS…ASLNIPGLPP (82 aa)) is hinge. A phosphoserine mark is found at serine 171 and serine 189. The FAD-binding FR-type domain occupies 271 to 533 (DPVFQVPISK…PRTTNSFHLP (263 aa)). Lysine 291 lines the NADP(+) pocket. FAD is bound by residues 451–454 (RPYS) and 487–490 (GVCT). Residues 610–611 (SR), 624–626 (YVQ), and aspartate 659 each bind NADP(+). Tryptophan 697 is a binding site for FAD.

Forms a multiprotein complex with MMACHC, MMADHC and MTR. FAD serves as cofactor. The cofactor is FMN. As to expression, found in all tissues tested, particularly abundant in skeletal muscle.

It is found in the cytoplasm. The enzyme catalyses 2 methylcob(III)alamin-[methionine synthase] + 2 S-adenosyl-L-homocysteine + NADP(+) + H(+) = 2 cob(II)alamin-[methionine synthase] + 2 S-adenosyl-L-methionine + NADPH. The catalysed reaction is 2 cob(II)alamin + A + 2 H2O + 2 H(+) = 2 aquacob(III)alamin + AH2. In terms of biological role, key enzyme in methionine and folate homeostasis responsible for the reactivation of methionine synthase (MTR/MS) activity by catalyzing the reductive methylation of MTR-bound cob(II)alamin. Cobalamin (vitamin B12) forms a complex with MTR to serve as an intermediary in methyl transfer reactions that cycles between MTR-bound methylcob(III)alamin and MTR bound-cob(I)alamin forms, and occasional oxidative escape of the cob(I)alamin intermediate during the catalytic cycle leads to the inactive cob(II)alamin species. The processing of cobalamin in the cytosol occurs in a multiprotein complex composed of at least MMACHC, MMADHC, MTRR and MTR which may contribute to shuttle safely and efficiently cobalamin towards MTR in order to produce methionine. Also necessary for the utilization of methyl groups from the folate cycle, thereby affecting transgenerational epigenetic inheritance. Also acts as a molecular chaperone for methionine synthase by stabilizing apoMTR and incorporating methylcob(III)alamin into apoMTR to form the holoenzyme. Also serves as an aquacob(III)alamin reductase by reducing aquacob(III)alamin to cob(II)alamin; this reduction leads to stimulation of the conversion of apoMTR and aquacob(III)alamin to MTR holoenzyme. The chain is Methionine synthase reductase from Homo sapiens (Human).